Consider the following 510-residue polypeptide: ATP synthase subunit alpha (510 aa).

169–176 is a binding site for ATP; the sequence is GDRQTGKT.

The protein belongs to the ATPase alpha/beta chains family. As to quaternary structure, F-type ATPases have 2 components, CF(1) - the catalytic core - and CF(0) - the membrane proton channel. CF(1) has five subunits: alpha(3), beta(3), gamma(1), delta(1), epsilon(1). CF(0) has three main subunits: a(1), b(2) and c(9-12). The alpha and beta chains form an alternating ring which encloses part of the gamma chain. CF(1) is attached to CF(0) by a central stalk formed by the gamma and epsilon chains, while a peripheral stalk is formed by the delta and b chains.

Its subcellular location is the cell inner membrane. The catalysed reaction is ATP + H2O + 4 H(+)(in) = ADP + phosphate + 5 H(+)(out). Functionally, produces ATP from ADP in the presence of a proton gradient across the membrane. The alpha chain is a regulatory subunit. The protein is ATP synthase subunit alpha of Anaeromyxobacter dehalogenans (strain 2CP-1 / ATCC BAA-258).